We begin with the raw amino-acid sequence, 288 residues long: Nucleotide-binding protein Veis_1053 (288 aa).

10–17 contacts ATP; sequence GMSGSGKS. 59-62 contributes to the GTP binding site; the sequence is DVRS.

It belongs to the RapZ-like family.

Its function is as follows. Displays ATPase and GTPase activities. The chain is Nucleotide-binding protein Veis_1053 from Verminephrobacter eiseniae (strain EF01-2).